We begin with the raw amino-acid sequence, 485 residues long: Sperm-associated antigen 8 (485 aa).

Disordered regions lie at residues M1–S42, K75–A98, and T127–P215. Positions S132–S150 are enriched in low complexity. The segment covering S151–S191 has biased composition (gly residues). Mn regions lie at residues S327–N340 and E379–A393.

The protein belongs to the SPAG8 family. Microtubule inner protein component of sperm flagellar doublet microtubules. Interacts with FHL5 (via second LIM domain). Interacts with RANBP9. In terms of tissue distribution, expressed in testis (germ cells), but not in liver, kidney, prostate and small intestine. Expressed in airway epithelial cells.

It is found in the cytoplasm. It localises to the nucleus. Its subcellular location is the cytoplasmic vesicle. The protein resides in the secretory vesicle. The protein localises to the acrosome. It is found in the cytoskeleton. It localises to the microtubule organizing center. Its subcellular location is the spindle. The protein resides in the cilium axoneme. The protein localises to the flagellum axoneme. In terms of biological role, microtubule inner protein (MIP) part of the dynein-decorated doublet microtubules (DMTs) in cilia axoneme, which is required for motile cilia beating. Plays a role in spermatogenesis by enhancing the binding of CREM isoform tau to its coactivator FHL5 and increasing the FHL5-regulated transcriptional activation of CREM isoform tau. Involved in the acrosome reaction and in binding of sperm to the zona pellucida. Plays a role in regulation of the cell cycle by controlling progression through the G2/M phase, possibly by delaying the activation of CDK1 which is required for entry into mitosis. May play a role in fertility and microtubule formation through interaction with RANBP9. The chain is Sperm-associated antigen 8 from Homo sapiens (Human).